The chain runs to 207 residues: Small ribosomal subunit protein uS4 (207 aa).

The disordered stretch occupies residues 30-53; that stretch reads DKSKFDTKPGQHGRTSGQRTSDFG. The segment covering 42-52 has biased composition (polar residues); sequence GRTSGQRTSDF. The region spanning 97–157 is the S4 RNA-binding domain; that stretch reads SRLDNVVYRM…EKSKKQARIV (61 aa).

This sequence belongs to the universal ribosomal protein uS4 family. In terms of assembly, part of the 30S ribosomal subunit. Contacts protein S5. The interaction surface between S4 and S5 is involved in control of translational fidelity.

In terms of biological role, one of the primary rRNA binding proteins, it binds directly to 16S rRNA where it nucleates assembly of the body of the 30S subunit. Its function is as follows. With S5 and S12 plays an important role in translational accuracy. The sequence is that of Small ribosomal subunit protein uS4 from Delftia acidovorans (strain DSM 14801 / SPH-1).